Consider the following 118-residue polypeptide: Small ribosomal subunit protein uS13 (118 aa).

The tract at residues 94–118 (GLPLRGQRTRTNARTRKGPRKAIRK) is disordered.

It belongs to the universal ribosomal protein uS13 family. In terms of assembly, part of the 30S ribosomal subunit. Forms a loose heterodimer with protein S19. Forms two bridges to the 50S subunit in the 70S ribosome.

In terms of biological role, located at the top of the head of the 30S subunit, it contacts several helices of the 16S rRNA. In the 70S ribosome it contacts the 23S rRNA (bridge B1a) and protein L5 of the 50S subunit (bridge B1b), connecting the 2 subunits; these bridges are implicated in subunit movement. Contacts the tRNAs in the A and P-sites. This chain is Small ribosomal subunit protein uS13, found in Stenotrophomonas maltophilia (strain R551-3).